The following is a 483-amino-acid chain: MAPQLLLCLILTFLWSLPEAESNVFLKSKVANRFLQRTKRANSLFEEFKSGNIERECIEERCSKEEAREAFEDDEKTETFWNVYVDGDQCSSNPCHYGGTCKDGIGSYTCTCLSGYEGKNCEYVLYKSCRVDNGDCWHFCKPVQNGIQCSCAESYLLGEDGHSCVAGGDFSCGRNIKTRNKREANLPDFQTDFSDDYDEIDENNFVETPTNFSGLVLTVQSQNATLLKKSDNPSPDIRVVNGTDCKLGECPWQALLLNDEGDGFCGGTILSPIYVLTAAHCINQTKYITVVVGEIDISSKKTGRLHSVDKIYVHQKFVPATYDYDIAIIQLKTPIQFSENVVPACLPTADFANQVLMKQNFGIVSGFGRTRERGKTSNTLKVVTLPYVDRHTCMLSSNFPITQNMFCAGYDTLPQDACQGDSGGPHITAYRDTHFITGIVSWGEGCAQTGKYGVYTKVSKFILWIKRIIRQKQPSTESSTGRL.

An N-terminal signal peptide occupies residues 1-20 (MAPQLLLCLILTFLWSLPEA). Residues 21–40 (ESNVFLKSKVANRFLQRTKR) constitute a propeptide that is removed on maturation. Positions 41–86 (ANSLFEEFKSGNIERECIEERCSKEEAREAFEDDEKTETFWNVYVD) constitute a Gla domain. 4-carboxyglutamate occurs at positions 46, 47, 54, 56, 59, 60, 65, 66, 69, 72, and 75. Residues Cys57 and Cys62 are joined by a disulfide bond. The EGF-like 1; calcium-binding domain maps to 86-122 (DGDQCSSNPCHYGGTCKDGIGSYTCTCLSGYEGKNCE). Intrachain disulfides connect Cys90–Cys101, Cys95–Cys110, Cys112–Cys121, Cys129–Cys140, Cys136–Cys149, Cys151–Cys164, Cys172–Cys345, Cys245–Cys250, Cys265–Cys281, Cys393–Cys407, and Cys418–Cys446. O-linked (Hex...) serine glycosylation occurs at Ser92. Position 103 is a (3R)-3-hydroxyaspartate (Asp103). The EGF-like 2 domain occupies 125 to 165 (LYKSCRVDNGDCWHFCKPVQNGIQCSCAESYLLGEDGHSCV). Positions 183-238 (EANLPDFQTDFSDDYDEIDENNFVETPTNFSGLVLTVQSQNATLLKKSDNPSPDIR) are cleaved as a propeptide — activation peptide. The 232-residue stretch at 239 to 470 (VVNGTDCKLG…FILWIKRIIR (232 aa)) folds into the Peptidase S1 domain. The active-site Charge relay system is the His280. Asn283 is a glycosylation site (N-linked (GlcNAc...) asparagine). The active-site Charge relay system is the Asp325. Ser422 acts as the Charge relay system in catalysis.

It belongs to the peptidase S1 family. As to quaternary structure, heterodimer of a light chain and a heavy chain; disulfide-linked. Post-translationally, gamma-carboxyglutamate residues are formed by vitamin K dependent carboxylation. These residues are essential for the binding of calcium. The activation peptide is cleaved by factor IXa (in the intrinsic pathway), or by factor VIIa (in the extrinsic pathway). In terms of processing, the iron and 2-oxoglutarate dependent 3-hydroxylation of aspartate and asparagine is (R) stereospecific within EGF domains. As to expression, plasma; synthesized in the liver.

The protein resides in the secreted. The catalysed reaction is Selective cleavage of Arg-|-Thr and then Arg-|-Ile bonds in prothrombin to form thrombin.. Factor Xa is a vitamin K-dependent glycoprotein that converts prothrombin to thrombin in the presence of factor Va, calcium and phospholipid during blood clotting. The sequence is that of Coagulation factor X isoform 1 (F10) from Pseudonaja textilis (Eastern brown snake).